A 147-amino-acid polypeptide reads, in one-letter code: MPGKKAPNGLFAARKLERKRLKFRWSQREFKRRMLKLKEKYDPLEGAPMARGIVLEKVGVEARKPNSAVRKCVRVQLVKNGKVVTAFVPGDGGLNVISEHDEVVIVGIGGPRGRSMGDIPGVRYKVVLVNGVSLDAILKGKKQKPVR.

This sequence belongs to the universal ribosomal protein uS12 family. As to quaternary structure, part of the 30S ribosomal subunit.

Functionally, with S4 and S5 plays an important role in translational accuracy. Located at the interface of the 30S and 50S subunits. This chain is Small ribosomal subunit protein uS12, found in Ignicoccus hospitalis (strain KIN4/I / DSM 18386 / JCM 14125).